A 496-amino-acid chain; its full sequence is Signal recognition particle subunit SRP54 1 (496 aa).

The segment at 1-296 is G-domain; that stretch reads MVLAQLGGSI…DVKPFVSRLL (296 aa). Residues 108 to 115, 191 to 195, and 249 to 252 contribute to the GTP site; these read GLQGSGKT, DTSGR, and TKMD. The interval 297–496 is M-domain; sequence GMGDLSGLVN…MGMFGGGGGE (200 aa).

This sequence belongs to the GTP-binding SRP family. SRP54 subfamily. As to quaternary structure, component of a signal recognition particle (SRP) complex that consists of a 7SL RNA molecule of 300 nucleotides and six protein subunits: SRP72, SRP68, SRP54, SRP19, SRP14 and SRP9.

It localises to the cytoplasm. The protein localises to the endoplasmic reticulum. The catalysed reaction is GTP + H2O = GDP + phosphate + H(+). Its function is as follows. Component of the signal recognition particle (SRP) complex, a ribonucleoprotein complex that mediates the cotranslational targeting of secretory and membrane proteins to the endoplasmic reticulum (ER). As part of the SRP complex, associates with the SRP receptor (SR) component SRPRA to target secretory proteins to the endoplasmic reticulum membrane. Binds to the signal sequence of presecretory proteins when they emerge from the ribosomes. Displays basal GTPase activity, and stimulates reciprocal GTPase activation of the SR subunit SRPRA. Forms a guanosine 5'-triphosphate (GTP)-dependent complex with the SR subunit SRPRA. SR compaction and GTPase mediated rearrangement of SR drive SRP-mediated cotranslational protein translocation into the ER. Requires the presence of SRP9/SRP14 and/or SRP19 to stably interact with RNA. This chain is Signal recognition particle subunit SRP54 1, found in Solanum lycopersicum (Tomato).